A 62-amino-acid polypeptide reads, in one-letter code: Photosystem II reaction center protein Z (62 aa).

The next 2 membrane-spanning stretches (helical) occupy residues 8 to 28 (AVFA…VVFA) and 41 to 61 (FSGT…NSLI).

The protein belongs to the PsbZ family. In terms of assembly, PSII is composed of 1 copy each of membrane proteins PsbA, PsbB, PsbC, PsbD, PsbE, PsbF, PsbH, PsbI, PsbJ, PsbK, PsbL, PsbM, PsbT, PsbY, PsbZ, Psb30/Ycf12, at least 3 peripheral proteins of the oxygen-evolving complex and a large number of cofactors. It forms dimeric complexes.

It localises to the plastid. Its subcellular location is the chloroplast thylakoid membrane. May control the interaction of photosystem II (PSII) cores with the light-harvesting antenna, regulates electron flow through the 2 photosystem reaction centers. PSII is a light-driven water plastoquinone oxidoreductase, using light energy to abstract electrons from H(2)O, generating a proton gradient subsequently used for ATP formation. This chain is Photosystem II reaction center protein Z, found in Coffea arabica (Arabian coffee).